We begin with the raw amino-acid sequence, 147 residues long: uncharacterized protein (147 aa).

The 59-residue stretch at 1-59 (MGAELVKWVKSHKIDAHIITFVAKMPYIDSIKLLEAGAKGCVWKTSHPAKLNRAIDSIS) folds into the Response regulatory domain. The 66-residue stretch at 78 to 143 (RYSSDNQLTN…ELIKTALRMG (66 aa)) folds into the HTH luxR-type domain. Residues 102 to 121 (NKEIANFLQLSRKTVETHRL) constitute a DNA-binding region (H-T-H motif).

Overexpressed protein is phosphorylated in vitro by non-cognate histidine kinases BarA and UhpB.

This is an uncharacterized protein from Escherichia coli (strain K12).